A 103-amino-acid polypeptide reads, in one-letter code: Small ribosomal subunit protein uS10 (103 aa).

This sequence belongs to the universal ribosomal protein uS10 family. As to quaternary structure, part of the 30S ribosomal subunit.

Its function is as follows. Involved in the binding of tRNA to the ribosomes. The chain is Small ribosomal subunit protein uS10 from Blochmanniella pennsylvanica (strain BPEN).